The sequence spans 433 residues: Succinate--CoA ligase [GDP-forming] subunit beta, mitochondrial (433 aa).

The transit peptide at 1-38 (IPAAPVAAQARKLLRDLAFRPPLLAARSQVVQLTPRRW) directs the protein to the mitochondrion. The ATP-grasp domain maps to 47–275 (KKLMSDNGVK…NAEFRQKDIF (229 aa)). GTP is bound at residue Gln-58. Lys-74 carries the post-translational modification N6-acetyllysine. At Lys-79 the chain carries N6-succinyllysine. 91 to 93 (GRG) provides a ligand contact to GTP. Lys-133 and Lys-140 each carry N6-acetyllysine. Leu-147 is a GTP binding site. At Ser-162 the chain carries Phosphoserine. Residues Lys-201 and Lys-228 each carry the N6-acetyllysine modification. Mg(2+) is bound by residues Asn-244 and Asp-258. Lys-272 and Lys-292 each carry N6-acetyllysine. A substrate-binding site is contributed by Asn-309. Lys-339 bears the N6-succinyllysine mark. An N6-acetyllysine modification is found at Lys-348. A substrate-binding site is contributed by 366 to 368 (GIV). Residues Lys-387 and Lys-424 each carry the N6-acetyllysine modification.

It belongs to the succinate/malate CoA ligase beta subunit family. GTP-specific subunit beta subfamily. Heterodimer of an alpha and a beta subunit. The beta subunit determines specificity for GTP. The cofactor is Mg(2+).

It localises to the mitochondrion. The catalysed reaction is GTP + succinate + CoA = succinyl-CoA + GDP + phosphate. It functions in the pathway carbohydrate metabolism; tricarboxylic acid cycle; succinate from succinyl-CoA (ligase route): step 1/1. GTP-specific succinyl-CoA synthetase functions in the citric acid cycle (TCA), coupling the hydrolysis of succinyl-CoA to the synthesis of GTP and thus represents the only step of substrate-level phosphorylation in the TCA. The beta subunit provides nucleotide specificity of the enzyme and binds the substrate succinate, while the binding sites for coenzyme A and phosphate are found in the alpha subunit. The polypeptide is Succinate--CoA ligase [GDP-forming] subunit beta, mitochondrial (Sus scrofa (Pig)).